The chain runs to 351 residues: N6-Methyl-AMP deaminase (351 aa).

Zn(2+)-binding residues include histidine 23 and histidine 25. N(6)-methyl-AMP is bound by residues histidine 25, asparagine 27, histidine 73, 105-108, aspartate 147, and glycine 180; that span reads STPR. Histidine 207 is a Zn(2+) binding site. N(6)-methyl-AMP is bound by residues glutamate 210, aspartate 292, and aspartate 293. Glutamate 210 serves as the catalytic Proton donor. Residue aspartate 292 participates in Zn(2+) binding.

It belongs to the metallo-dependent hydrolases superfamily. Adenosine and AMP deaminases family. In terms of assembly, monomer. Requires Zn(2+) as cofactor.

The catalysed reaction is N(6)-methyl-AMP + H2O + H(+) = IMP + methylamine. Its function is as follows. Catalyzes the hydrolysis of the free cytosolic methylated adenosine nucleotide N(6)-methyl-AMP (N6-mAMP) to produce inositol monophosphate (IMP) and methylamine. Is required for the catabolism of cytosolic N6-mAMP, which is derived from the degradation of mRNA containing N6-methylated adenine (m6A). The protein is N6-Methyl-AMP deaminase of Bos taurus (Bovine).